A 590-amino-acid chain; its full sequence is Multidrug resistance ABC transporter ATP-binding and permease protein (590 aa).

A run of 6 helical transmembrane segments spans residues 35–55 (YLFF…QLQV), 79–99 (IALY…LGIF), 150–170 (IPQA…MLQM), 176–196 (LAMI…MTFG), 261–281 (VMML…IYLI), and 292–312 (LGMM…ATFF). Residues 38 to 317 (FVIGIVAGII…VATFFTELAK (280 aa)) enclose the ABC transmembrane type-1 domain. The ABC transporter domain occupies 349-584 (LSAHHVDFAY…HPLYAKYVSE (236 aa)). 382–389 (GPSGGGKS) lines the ATP pocket.

The protein belongs to the ABC transporter superfamily. Multidrug exporter LmrA (TC 3.A.1.117.1) family. As to quaternary structure, homodimer.

It is found in the cell membrane. It catalyses the reaction ATP + H2O + xenobioticSide 1 = ADP + phosphate + xenobioticSide 2.. Its function is as follows. Efflux transporter for a variety of amphiphilic cationic compounds, including antibiotics. This is Multidrug resistance ABC transporter ATP-binding and permease protein (lmrA) from Lactococcus lactis subsp. cremoris (strain MG1363).